A 220-amino-acid polypeptide reads, in one-letter code: Phosphopantothenoylcysteine decarboxylase (220 aa).

FMN is bound by residues 29–31 (GSV) and 54–56 (TKA). The active-site Proton donor is the H91. Residues 107–110 (SANT) and A141 contribute to the FMN site. N-[(R)-4-phosphopantothenoyl]-L-cysteine-binding residues include N143, R173, and A175. Catalysis depends on C176, which acts as the Proton donor. M184 is a binding site for N-[(R)-4-phosphopantothenoyl]-L-cysteine.

It belongs to the HFCD (homooligomeric flavin containing Cys decarboxylase) superfamily. Forms homotrimers. Interacts with HIP1. Interacts with HD1 in the dark. Requires FMN as cofactor. As to expression, expressed in root meristem, shoot apical meristem (SAM), intercalary meristem, floral meristem, embryo and tip of the coleoptile before true leaf emergence.

It localises to the nucleus. It carries out the reaction N-[(R)-4-phosphopantothenoyl]-L-cysteine + H(+) = (R)-4'-phosphopantetheine + CO2. Its pathway is cofactor biosynthesis; coenzyme A biosynthesis; CoA from (R)-pantothenate: step 3/5. Its function is as follows. Catalyzes the decarboxylation of 4'-phosphopantothenoylcysteine to 4'-phosphopantetheine, a key step in coenzyme A biosynthesis. Involved in salt and osmotic tolerance, and light-regulated plant growth. Trimerization of HAL3 recruits and activates the E3 ubiquitin-protein ligase HIP1, which leads to the degradation of cell cycle suppressors, resulting in enhancement of cell division and plant growth. HAL3 function in cell division seems to be independent from its PPC decarboxylase activity. Acts as a positive regulator of flowering by binding to HD1 in the dark. This chain is Phosphopantothenoylcysteine decarboxylase, found in Oryza sativa subsp. japonica (Rice).